Consider the following 547-residue polypeptide: Delta-guaiene synthase 1 (547 aa).

Residues Asp299, Asp303, and Asp444 each contribute to the Mg(2+) site. The DDXXD motif signature appears at 299–303 (DDTYD).

This sequence belongs to the terpene synthase family. Mg(2+) serves as cofactor.

It carries out the reaction (2E,6E)-farnesyl diphosphate = delta-guaiene + diphosphate. It catalyses the reaction (2E,6E)-farnesyl diphosphate = alpha-guaiene + diphosphate. It functions in the pathway secondary metabolite biosynthesis; terpenoid biosynthesis. Sesquiterpene synthase involved in the biosynthesis of delta-guaiene (81.2%) and alpha-guaiene (18.1%), two structures composed of five- and seven-membered rings. Also produces 0.7% of alpha-humulene. This Aquilaria crassna (Eagle wood) protein is Delta-guaiene synthase 1 (C2).